The following is a 257-amino-acid chain: Ubiquinone biosynthesis O-methyltransferase (257 aa).

S-adenosyl-L-methionine-binding residues include arginine 43, glycine 77, aspartate 98, and methionine 144.

The protein belongs to the methyltransferase superfamily. UbiG/COQ3 family.

It catalyses the reaction a 3-demethylubiquinol + S-adenosyl-L-methionine = a ubiquinol + S-adenosyl-L-homocysteine + H(+). The catalysed reaction is a 3-(all-trans-polyprenyl)benzene-1,2-diol + S-adenosyl-L-methionine = a 2-methoxy-6-(all-trans-polyprenyl)phenol + S-adenosyl-L-homocysteine + H(+). The protein operates within cofactor biosynthesis; ubiquinone biosynthesis. In terms of biological role, O-methyltransferase that catalyzes the 2 O-methylation steps in the ubiquinone biosynthetic pathway. This is Ubiquinone biosynthesis O-methyltransferase from Psychrobacter arcticus (strain DSM 17307 / VKM B-2377 / 273-4).